Consider the following 450-residue polypeptide: Sorting nexin-4 (450 aa).

Methionine 1 carries the N-acetylmethionine modification. Positions 1–46 are disordered; it reads MEQAPPDPERQLQPAPLEPLGSPDAVLGAAVGKETEGAGEESSGVD. A Phosphoserine modification is found at serine 22. The PX domain maps to 61–187; it reads SVSEAEKRTG…YLFLTQEGNW (127 aa). A 1,2-diacyl-sn-glycero-3-phospho-(1D-myo-inositol-3-phosphate) is bound by residues arginine 106, serine 108, lysine 132, and arginine 154.

The protein belongs to the sorting nexin family. Heterodimer; heterodimerizes with SNX7 or SNX30. Interacts with WWC1/KIBRA. Identified in a complex with WWC1/KIBRA and dynein components DYNLL1 and DYNC1I2. Interacts with BIN1.

The protein localises to the early endosome. It localises to the early endosome membrane. Its function is as follows. Involved in the regulation of endocytosis and in several stages of intracellular trafficking. Plays a role in recycling endocytosed transferrin receptor and prevent its degradation. Involved in autophagosome assembly by regulating trafficking and recycling of phospholipid scramblase ATG9A. The polypeptide is Sorting nexin-4 (Pongo abelii (Sumatran orangutan)).